A 214-amino-acid polypeptide reads, in one-letter code: Guanylate kinase (214 aa).

Residues 6–192 (GTLYIISAPS…ALEDLKAIFR (187 aa)) enclose the Guanylate kinase-like domain. 13–20 (APSGAGKT) contributes to the ATP binding site.

This sequence belongs to the guanylate kinase family.

The protein resides in the cytoplasm. The enzyme catalyses GMP + ATP = GDP + ADP. In terms of biological role, essential for recycling GMP and indirectly, cGMP. The chain is Guanylate kinase from Pseudomonas savastanoi pv. phaseolicola (strain 1448A / Race 6) (Pseudomonas syringae pv. phaseolicola (strain 1448A / Race 6)).